A 168-amino-acid polypeptide reads, in one-letter code: Thiol peroxidase (168 aa).

The Thioredoxin domain maps to 19 to 168; it reads PQAGSKAQTF…YEAALAVLKA (150 aa). The active-site Cysteine sulfenic acid (-SOH) intermediate is cysteine 61. A disulfide bridge connects residues cysteine 61 and cysteine 95.

Belongs to the peroxiredoxin family. Tpx subfamily. As to quaternary structure, homodimer.

It carries out the reaction a hydroperoxide + [thioredoxin]-dithiol = an alcohol + [thioredoxin]-disulfide + H2O. Functionally, thiol-specific peroxidase that catalyzes the reduction of hydrogen peroxide and organic hydroperoxides to water and alcohols, respectively. Plays a role in cell protection against oxidative stress by detoxifying peroxides. The sequence is that of Thiol peroxidase from Shigella dysenteriae.